Reading from the N-terminus, the 284-residue chain is 2-dehydro-3-deoxyphosphooctonate aldolase (284 aa).

The protein belongs to the KdsA family.

It is found in the cytoplasm. The catalysed reaction is D-arabinose 5-phosphate + phosphoenolpyruvate + H2O = 3-deoxy-alpha-D-manno-2-octulosonate-8-phosphate + phosphate. It participates in carbohydrate biosynthesis; 3-deoxy-D-manno-octulosonate biosynthesis; 3-deoxy-D-manno-octulosonate from D-ribulose 5-phosphate: step 2/3. It functions in the pathway bacterial outer membrane biogenesis; lipopolysaccharide biosynthesis. In Escherichia coli O6:H1 (strain CFT073 / ATCC 700928 / UPEC), this protein is 2-dehydro-3-deoxyphosphooctonate aldolase.